An 80-amino-acid chain; its full sequence is Large ribosomal subunit protein bL31B (80 aa).

It belongs to the bacterial ribosomal protein bL31 family. Type B subfamily. In terms of assembly, part of the 50S ribosomal subunit.

This is Large ribosomal subunit protein bL31B from Streptococcus mutans serotype c (strain ATCC 700610 / UA159).